The sequence spans 488 residues: Glutamyl-tRNA(Gln) amidotransferase subunit A (488 aa).

Catalysis depends on charge relay system residues Lys-77 and Ser-152. Ser-176 (acyl-ester intermediate) is an active-site residue.

It belongs to the amidase family. GatA subfamily. As to quaternary structure, heterotrimer of A, B and C subunits.

It carries out the reaction L-glutamyl-tRNA(Gln) + L-glutamine + ATP + H2O = L-glutaminyl-tRNA(Gln) + L-glutamate + ADP + phosphate + H(+). Its function is as follows. Allows the formation of correctly charged Gln-tRNA(Gln) through the transamidation of misacylated Glu-tRNA(Gln) in organisms which lack glutaminyl-tRNA synthetase. The reaction takes place in the presence of glutamine and ATP through an activated gamma-phospho-Glu-tRNA(Gln). This is Glutamyl-tRNA(Gln) amidotransferase subunit A from Streptococcus pyogenes serotype M18 (strain MGAS8232).